A 594-amino-acid polypeptide reads, in one-letter code: Protein HOTHEAD (594 aa).

A signal peptide spans 1–19; the sequence is MALKLFLFALLLCLPTSLS. FAD is bound at residue 64–91; it reads DYIVIGGGTAGCPLAATLSQNFSVLVLE. The active-site Proton acceptor is His-529.

Belongs to the GMC oxidoreductase family. FAD is required as a cofactor. Expressed in roots, leaves, stems, inflorescences and siliques. Found not only in epidermis but also in all sub-epidermal cell layers.

In terms of biological role, probable FAD-dependent enzyme. Involved in regulating post-genital organ fusion. Required to limit cellular interactions between contacting epidermal cells during floral development. This Arabidopsis thaliana (Mouse-ear cress) protein is Protein HOTHEAD (HTH).